The primary structure comprises 179 residues: M-phase-specific PLK1-interacting protein (179 aa).

A disordered region spans residues 1-135 (MQRQNFRPPT…RVREKRMSNE (135 aa)). Position 37 is an asymmetric dimethylarginine (R37). 2 positions are modified to phosphoserine: S40 and S47. Position 51 is a phosphothreonine (T51). R57 is subject to Omega-N-methylarginine. 2 positions are modified to asymmetric dimethylarginine: R59 and R68. Over residues 60–71 (PYGSSHSPRHGG) the composition is skewed to low complexity. Phosphoserine is present on S72. An Asymmetric dimethylarginine modification is found at R77. Residues 79–109 (GSPSPGGYPGSYSRSPAGSQQQFGYSPGQQQ) are compositionally biased toward low complexity. Residues S80, S82, S93, S104, and S115 each carry the phosphoserine modification. Residues 110 to 122 (THPQGSPRTSTPF) show a composition bias toward polar residues. R117 is subject to Omega-N-methylarginine. T120 bears the Phosphothreonine mark. A phosphoserine mark is found at S124 and S133.

As to quaternary structure, interacts with PLK1; phosphorylation-dependent. Phosphorylated during mitosis in the cell cycle probably by CDK1. In terms of tissue distribution, expressed at highest levels in liver and kidney; intermediate expression in skeletal muscle, pancreas, heart and placenta; low expression in brain and lung. Expressed in epidermis and hair follicles.

The protein resides in the nucleus. It localises to the cytoplasm. The protein localises to the cytoskeleton. It is found in the microtubule organizing center. Its subcellular location is the centrosome. In terms of biological role, may play a role in maintenance of cell cycle integrity by regulating mitosis or cytokinesis. The polypeptide is M-phase-specific PLK1-interacting protein (MPLKIP) (Homo sapiens (Human)).